Consider the following 386-residue polypeptide: Succinate--CoA ligase [ADP-forming] subunit beta (386 aa).

The ATP-grasp domain maps to Lys-9 to Glu-244. ATP contacts are provided by residues Lys-46, Gly-53 to Gly-55, Glu-99, Cys-102, and Glu-107. Residues Asn-199 and Asp-213 each coordinate Mg(2+). Substrate contacts are provided by residues Asn-264 and Gly-320–Met-322.

This sequence belongs to the succinate/malate CoA ligase beta subunit family. In terms of assembly, heterotetramer of two alpha and two beta subunits. Mg(2+) is required as a cofactor.

It carries out the reaction succinate + ATP + CoA = succinyl-CoA + ADP + phosphate. It catalyses the reaction GTP + succinate + CoA = succinyl-CoA + GDP + phosphate. The protein operates within carbohydrate metabolism; tricarboxylic acid cycle; succinate from succinyl-CoA (ligase route): step 1/1. Succinyl-CoA synthetase functions in the citric acid cycle (TCA), coupling the hydrolysis of succinyl-CoA to the synthesis of either ATP or GTP and thus represents the only step of substrate-level phosphorylation in the TCA. The beta subunit provides nucleotide specificity of the enzyme and binds the substrate succinate, while the binding sites for coenzyme A and phosphate are found in the alpha subunit. The polypeptide is Succinate--CoA ligase [ADP-forming] subunit beta (Ehrlichia canis (strain Jake)).